The sequence spans 257 residues: Imidazole glycerol phosphate synthase subunit HisF (257 aa).

Residues aspartate 11 and aspartate 130 contribute to the active site.

Belongs to the HisA/HisF family. As to quaternary structure, heterodimer of HisH and HisF.

The protein resides in the cytoplasm. It carries out the reaction 5-[(5-phospho-1-deoxy-D-ribulos-1-ylimino)methylamino]-1-(5-phospho-beta-D-ribosyl)imidazole-4-carboxamide + L-glutamine = D-erythro-1-(imidazol-4-yl)glycerol 3-phosphate + 5-amino-1-(5-phospho-beta-D-ribosyl)imidazole-4-carboxamide + L-glutamate + H(+). It participates in amino-acid biosynthesis; L-histidine biosynthesis; L-histidine from 5-phospho-alpha-D-ribose 1-diphosphate: step 5/9. In terms of biological role, IGPS catalyzes the conversion of PRFAR and glutamine to IGP, AICAR and glutamate. The HisF subunit catalyzes the cyclization activity that produces IGP and AICAR from PRFAR using the ammonia provided by the HisH subunit. This is Imidazole glycerol phosphate synthase subunit HisF from Shewanella baltica (strain OS155 / ATCC BAA-1091).